Reading from the N-terminus, the 202-residue chain is Imidazoleglycerol-phosphate dehydratase (202 aa).

Belongs to the imidazoleglycerol-phosphate dehydratase family.

The protein resides in the cytoplasm. The enzyme catalyses D-erythro-1-(imidazol-4-yl)glycerol 3-phosphate = 3-(imidazol-4-yl)-2-oxopropyl phosphate + H2O. The protein operates within amino-acid biosynthesis; L-histidine biosynthesis; L-histidine from 5-phospho-alpha-D-ribose 1-diphosphate: step 6/9. This is Imidazoleglycerol-phosphate dehydratase from Rhizobium leguminosarum bv. trifolii (strain WSM2304).